The following is a 320-amino-acid chain: o-succinylbenzoate synthase (320 aa).

The Proton donor role is filled by Lys-133. Mg(2+) is bound by residues Asp-161, Glu-190, and Asp-213. The active-site Proton acceptor is Lys-235.

Belongs to the mandelate racemase/muconate lactonizing enzyme family. MenC type 1 subfamily. A divalent metal cation serves as cofactor.

The catalysed reaction is (1R,6R)-6-hydroxy-2-succinyl-cyclohexa-2,4-diene-1-carboxylate = 2-succinylbenzoate + H2O. The protein operates within quinol/quinone metabolism; 1,4-dihydroxy-2-naphthoate biosynthesis; 1,4-dihydroxy-2-naphthoate from chorismate: step 4/7. Its pathway is quinol/quinone metabolism; menaquinone biosynthesis. In terms of biological role, converts 2-succinyl-6-hydroxy-2,4-cyclohexadiene-1-carboxylate (SHCHC) to 2-succinylbenzoate (OSB). The chain is o-succinylbenzoate synthase from Salmonella agona (strain SL483).